Consider the following 98-residue polypeptide: Co-chaperonin GroES (98 aa).

The protein belongs to the GroES chaperonin family. As to quaternary structure, heptamer of 7 subunits arranged in a ring. Interacts with the chaperonin GroEL.

It is found in the cytoplasm. Together with the chaperonin GroEL, plays an essential role in assisting protein folding. The GroEL-GroES system forms a nano-cage that allows encapsulation of the non-native substrate proteins and provides a physical environment optimized to promote and accelerate protein folding. GroES binds to the apical surface of the GroEL ring, thereby capping the opening of the GroEL channel. This Brucella abortus (strain S19) protein is Co-chaperonin GroES.